Consider the following 324-residue polypeptide: tRNA pseudouridine synthase B (324 aa).

The active-site Nucleophile is the Asp49. The segment at 87 to 107 is disordered; it reads RSTDDLEGQPTKTSDKRPSRE.

The protein belongs to the pseudouridine synthase TruB family. Type 1 subfamily.

It carries out the reaction uridine(55) in tRNA = pseudouridine(55) in tRNA. In terms of biological role, responsible for synthesis of pseudouridine from uracil-55 in the psi GC loop of transfer RNAs. In Brucella canis (strain ATCC 23365 / NCTC 10854 / RM-666), this protein is tRNA pseudouridine synthase B.